The following is a 382-amino-acid chain: Osmoprotectant import ATP-binding protein OsmV (382 aa).

Positions 2–241 (IKLENLTKQF…PANEFVGSFV (240 aa)) constitute an ABC transporter domain. 39–46 (GPSGCGKT) provides a ligand contact to ATP. CBS domains lie at 258-320 (VTDQ…THPF) and 322-373 (ITGK…GRTR).

This sequence belongs to the ABC transporter superfamily. The complex is composed of two ATP-binding proteins (OsmV), two transmembrane proteins (OsmW and OsmY) and a solute-binding protein (OsmX).

It localises to the cell inner membrane. Functionally, part of the OsmU ABC transporter complex, which is involved in the uptake of osmoprotectants such as choline-O-sulfate and glycine betaine. Probably responsible for energy coupling to the transport system. This chain is Osmoprotectant import ATP-binding protein OsmV (osmV), found in Salmonella typhimurium (strain LT2 / SGSC1412 / ATCC 700720).